Consider the following 291-residue polypeptide: N-acetylmannosamine kinase (291 aa).

Residues 5-12 (AIDIGGTK) and 132-139 (GVGGGVVC) each bind ATP. Residues His-156, Cys-166, Cys-168, and Cys-173 each contribute to the Zn(2+) site.

The protein belongs to the ROK (NagC/XylR) family. NanK subfamily. As to quaternary structure, homodimer.

It carries out the reaction an N-acyl-D-mannosamine + ATP = an N-acyl-D-mannosamine 6-phosphate + ADP + H(+). Its pathway is amino-sugar metabolism; N-acetylneuraminate degradation; D-fructose 6-phosphate from N-acetylneuraminate: step 2/5. In terms of biological role, catalyzes the phosphorylation of N-acetylmannosamine (ManNAc) to ManNAc-6-P. The sequence is that of N-acetylmannosamine kinase from Salmonella heidelberg (strain SL476).